Here is a 403-residue protein sequence, read N- to C-terminus: MALRSAQGDGPTSGHWDGGAEKADFNAKRKKKVAEIHQALNSDPTDVAALRRMAISEGGLLTDEIRRKVWPKLLNVNANDPPPISGKNLRQMSKDYQQVLLDVRRSLRRFPPGMPEEQREGLQEELIDIILLILERNPQLHYYQGYHDIVVTFLLVVGERLATSLVEKLSTHHLRDFMDPTMDNTKHILNYLMPIIDQVNPELHDFMQSAEVGTIFALSWLITWFGHVLSDFRHVVRLYDFFLACHPLMPIYFAAVIVLYREQEVLDCDCDMASVHHLLSQIPQDLPYETLISRAGDLFVQFPPSELAREAAAQQQAERTAASTFKDFELASAQQRPDMVLRQRFRGLLRPEDRTKDVLTKPRTNRFVKLAVMGLTVALGAAALAVVKSALEWAPKFQLQLFP.

Residues 1–25 are disordered; the sequence is MALRSAQGDGPTSGHWDGGAEKADF. In terms of domain architecture, Rab-GAP TBC spans 60–246; it reads LLTDEIRRKV…RLYDFFLACH (187 aa). 2 helical membrane passes run 238 to 258 and 367 to 387; these read LYDFFLACHPLMPIYFAAVIV and FVKLAVMGLTVALGAAALAVV.

As to quaternary structure, (Microbial infection) Directly interacts with the N-terminal amphipathic helix of hepatitis C virus (HCV) NS5A.

It localises to the membrane. GTPase-activating protein (GAP) specific for Rab1 and Rab2 small GTPase families for which it can accelerate the intrinsic GTP hydrolysis rate by more than five orders of magnitude. Also shows GAP activity for RAB18 GTPase. Promotes RAB18 dissociation from the endoplasmic reticulum (ER) membrane into the cytosol, probably through stimulating RAB18 GTP-hydrolysis. Involved in maintaining endoplasmic reticulum structure. The sequence is that of TBC1 domain family member 20 from Homo sapiens (Human).